A 62-amino-acid chain; its full sequence is Large ribosomal subunit protein bL35 (62 aa).

The interval 25 to 62 (EQAYRSHLSQNKTTKQKRQARKSVQMHSSDVKRFKALI) is disordered. Residues 53–62 (SDVKRFKALI) are compositionally biased toward basic and acidic residues.

The protein belongs to the bacterial ribosomal protein bL35 family.

The sequence is that of Large ribosomal subunit protein bL35 from Mycoplasmopsis fermentans (Mycoplasma fermentans).